The chain runs to 257 residues: MLSIVASPPVISAVSLSKPLQSLAKAALSLSKRAKPTSPFPKTARSISVYKSPMNNLFTRLGFGSRPQPDPAASSAIAQGPDDDVPSPGQQFAQFGAGCFWGAELAYQRVPGVTKTEVGYSHGFVDNPTYEDVCSETTGHNEIVRVQYDPKEVSFESLLDVFWKRHDPTTLNRQGNDVGTRYRSGIYFYTDEQEKLAREAMEKQQKILNRKIVTEILPATKFYRAENYHQQYLAKGGRMGLSQSAEKGCNDPIRCYG.

The tract at residues 61–88 (LGFGSRPQPDPAASSAIAQGPDDDVPSP) is disordered. S244 carries the phosphoserine modification.

Belongs to the MsrA Met sulfoxide reductase family.

It catalyses the reaction L-methionyl-[protein] + [thioredoxin]-disulfide + H2O = L-methionyl-(S)-S-oxide-[protein] + [thioredoxin]-dithiol. It carries out the reaction [thioredoxin]-disulfide + L-methionine + H2O = L-methionine (S)-S-oxide + [thioredoxin]-dithiol. In terms of biological role, has an important function as a repair enzyme for proteins that have been inactivated by oxidation. Catalyzes the reversible oxidation-reduction of methionine sulfoxide in proteins to methionine. This Brassica napus (Rape) protein is Peptide methionine sulfoxide reductase (PMSR).